A 187-amino-acid polypeptide reads, in one-letter code: Pyridoxal 5'-phosphate synthase subunit PdxT (187 aa).

Position 47-49 (47-49 (GES)) interacts with L-glutamine. Cys76 (nucleophile) is an active-site residue. L-glutamine contacts are provided by residues Arg102 and 128 to 129 (IR). Catalysis depends on charge relay system residues His165 and Glu167.

This sequence belongs to the glutaminase PdxT/SNO family. In terms of assembly, in the presence of PdxS, forms a dodecamer of heterodimers. Only shows activity in the heterodimer.

The enzyme catalyses aldehydo-D-ribose 5-phosphate + D-glyceraldehyde 3-phosphate + L-glutamine = pyridoxal 5'-phosphate + L-glutamate + phosphate + 3 H2O + H(+). The catalysed reaction is L-glutamine + H2O = L-glutamate + NH4(+). Its pathway is cofactor biosynthesis; pyridoxal 5'-phosphate biosynthesis. Catalyzes the hydrolysis of glutamine to glutamate and ammonia as part of the biosynthesis of pyridoxal 5'-phosphate. The resulting ammonia molecule is channeled to the active site of PdxS. In Methanococcus maripaludis (strain C5 / ATCC BAA-1333), this protein is Pyridoxal 5'-phosphate synthase subunit PdxT.